A 229-amino-acid polypeptide reads, in one-letter code: Peptidase E (229 aa).

Active-site charge relay system residues include serine 120, aspartate 135, and histidine 157.

The protein belongs to the peptidase S51 family.

The protein localises to the cytoplasm. It carries out the reaction Dipeptidase E catalyzes the hydrolysis of dipeptides Asp-|-Xaa. It does not act on peptides with N-terminal Glu, Asn or Gln, nor does it cleave isoaspartyl peptides.. Hydrolyzes dipeptides containing N-terminal aspartate residues. May play a role in allowing the cell to use peptide aspartate to spare carbon otherwise required for the synthesis of the aspartate family of amino acids. This chain is Peptidase E, found in Escherichia coli O6:K15:H31 (strain 536 / UPEC).